A 233-amino-acid polypeptide reads, in one-letter code: Probable GTP-binding protein EngB (233 aa).

In terms of domain architecture, EngB-type G spans 23-209 (AVPEVAFAGR…QRIVAGWLCL (187 aa)). Residues 31–38 (GRSNAGKS), 58–62 (GRTQH), 82–85 (DLPG), 149–152 (TKAD), and 188–190 (FSS) each bind GTP. Residues Ser38 and Thr60 each coordinate Mg(2+).

This sequence belongs to the TRAFAC class TrmE-Era-EngA-EngB-Septin-like GTPase superfamily. EngB GTPase family. It depends on Mg(2+) as a cofactor.

Its function is as follows. Necessary for normal cell division and for the maintenance of normal septation. This is Probable GTP-binding protein EngB from Ralstonia pickettii (strain 12J).